We begin with the raw amino-acid sequence, 264 residues long: Thymidylate synthase (264 aa).

Residue Arg-21 participates in dUMP binding. His-51 lines the (6R)-5,10-methylene-5,6,7,8-tetrahydrofolate pocket. A dUMP-binding site is contributed by 126–127 (RR). Catalysis depends on Cys-146, which acts as the Nucleophile. Residues 166–169 (RSCD), Asn-177, and 207–209 (HLY) each bind dUMP. Residue Asp-169 participates in (6R)-5,10-methylene-5,6,7,8-tetrahydrofolate binding. Residue Ala-263 coordinates (6R)-5,10-methylene-5,6,7,8-tetrahydrofolate.

Belongs to the thymidylate synthase family. Bacterial-type ThyA subfamily. As to quaternary structure, homodimer.

Its subcellular location is the cytoplasm. The catalysed reaction is dUMP + (6R)-5,10-methylene-5,6,7,8-tetrahydrofolate = 7,8-dihydrofolate + dTMP. It participates in pyrimidine metabolism; dTTP biosynthesis. Catalyzes the reductive methylation of 2'-deoxyuridine-5'-monophosphate (dUMP) to 2'-deoxythymidine-5'-monophosphate (dTMP) while utilizing 5,10-methylenetetrahydrofolate (mTHF) as the methyl donor and reductant in the reaction, yielding dihydrofolate (DHF) as a by-product. This enzymatic reaction provides an intracellular de novo source of dTMP, an essential precursor for DNA biosynthesis. This is Thymidylate synthase from Pectobacterium atrosepticum (strain SCRI 1043 / ATCC BAA-672) (Erwinia carotovora subsp. atroseptica).